The primary structure comprises 741 residues: Catalase-peroxidase (741 aa).

Residues 1–21 (MRNFRRFTIALLVLFLGPIGA) form the signal peptide. Positions 109 to 231 (WHSAGTYRIS…LAAVQMGLIY (123 aa)) form a cross-link, tryptophyl-tyrosyl-methioninium (Trp-Tyr) (with M-257). Residue histidine 110 is the Proton acceptor of the active site. The segment at residues 231-257 (YVNPEGPNGNPDPLAAAKDIRETFGRM) is a cross-link (tryptophyl-tyrosyl-methioninium (Tyr-Met) (with W-109)). Heme b is bound at residue histidine 272.

Belongs to the peroxidase family. Peroxidase/catalase subfamily. In terms of assembly, homodimer or homotetramer. The cofactor is heme b. Post-translationally, formation of the three residue Trp-Tyr-Met cross-link is important for the catalase, but not the peroxidase activity of the enzyme.

The enzyme catalyses H2O2 + AH2 = A + 2 H2O. The catalysed reaction is 2 H2O2 = O2 + 2 H2O. Its function is as follows. Bifunctional enzyme with both catalase and broad-spectrum peroxidase activity. The sequence is that of Catalase-peroxidase from Leptospira biflexa serovar Patoc (strain Patoc 1 / Ames).